Here is a 780-residue protein sequence, read N- to C-terminus: Copper-exporting P-type ATPase (780 aa).

In terms of domain architecture, HMA spans 2–67 (QRIQLNITGM…AVRRAALCTD (66 aa)). Cys13 and Cys16 together coordinate Cu(+). Helical transmembrane passes span 89–109 (LAVA…FAVL), 114–134 (FPGW…WAAW), 153–173 (TLIS…VFGH), 185–205 (ALLG…VFVL), 348–368 (VFVP…LIAG), and 374–394 (VFSA…GLAT). Asp430 functions as the 4-aspartylphosphate intermediate in the catalytic mechanism. The next 2 helical transmembrane spans lie at 680 to 698 (FNMV…IAAA) and 704 to 722 (LVAG…SNSL).

Belongs to the cation transport ATPase (P-type) (TC 3.A.3) family. Type IB subfamily.

It is found in the cell membrane. It catalyses the reaction Cu(+)(in) + ATP + H2O = Cu(+)(out) + ADP + phosphate + H(+). Its function is as follows. Involved in copper export. The sequence is that of Copper-exporting P-type ATPase (ctpA) from Mycobacterium leprae (strain TN).